The sequence spans 263 residues: Acyl-[acyl-carrier-protein]--UDP-N-acetylglucosamine O-acyltransferase (263 aa).

The protein belongs to the transferase hexapeptide repeat family. LpxA subfamily. In terms of assembly, homotrimer.

It localises to the cytoplasm. It carries out the reaction a (3R)-hydroxyacyl-[ACP] + UDP-N-acetyl-alpha-D-glucosamine = a UDP-3-O-[(3R)-3-hydroxyacyl]-N-acetyl-alpha-D-glucosamine + holo-[ACP]. It participates in glycolipid biosynthesis; lipid IV(A) biosynthesis; lipid IV(A) from (3R)-3-hydroxytetradecanoyl-[acyl-carrier-protein] and UDP-N-acetyl-alpha-D-glucosamine: step 1/6. Its function is as follows. Involved in the biosynthesis of lipid A, a phosphorylated glycolipid that anchors the lipopolysaccharide to the outer membrane of the cell. This chain is Acyl-[acyl-carrier-protein]--UDP-N-acetylglucosamine O-acyltransferase, found in Campylobacter jejuni subsp. jejuni serotype O:23/36 (strain 81-176).